A 128-amino-acid chain; its full sequence is Small ribosomal subunit protein uS9 (128 aa).

Residues 97 to 113 (RSEGFMTRDPRSVERKK) are compositionally biased toward basic and acidic residues. A disordered region spans residues 97–128 (RSEGFMTRDPRSVERKKPGQPKARRRFQFSKR). The segment covering 114 to 128 (PGQPKARRRFQFSKR) has biased composition (basic residues).

It belongs to the universal ribosomal protein uS9 family.

In Bacteroides fragilis (strain ATCC 25285 / DSM 2151 / CCUG 4856 / JCM 11019 / LMG 10263 / NCTC 9343 / Onslow / VPI 2553 / EN-2), this protein is Small ribosomal subunit protein uS9.